A 115-amino-acid chain; its full sequence is UPF0738 protein SAV1005 (115 aa).

It belongs to the UPF0738 family.

This is UPF0738 protein SAV1005 from Staphylococcus aureus (strain Mu50 / ATCC 700699).